Reading from the N-terminus, the 278-residue chain is HTH-type transcriptional activator RhaS (278 aa).

Residues 174-272 (NLLLAWLEDH…NWSPRDIRQG (99 aa)) enclose the HTH araC/xylS-type domain. DNA-binding regions (H-T-H motif) lie at residues 191 to 212 (DAVA…KQQT) and 239 to 262 (VTDI…RREF).

In terms of assembly, binds DNA as a dimer.

Its subcellular location is the cytoplasm. Activates expression of the rhaBAD and rhaT operons. This is HTH-type transcriptional activator RhaS from Shigella sonnei (strain Ss046).